A 372-amino-acid chain; its full sequence is Protein phosphatase Mn(2+)-dependent 1K (372 aa).

The transit peptide at 1-29 directs the protein to the mitochondrion; the sequence is MLSAAFITLLRSGGNQVKKRVLLSSILLQ. A critical for association with the BCKDH complex region spans residues 46 to 61; sequence RCSRFDPDGSGQPATW. Residues 94–346 form the PPM-type phosphatase domain; it reads NVGCASLIGK…DNSTAVVVPF (253 aa). Residues Asp-127 and Gly-128 each contribute to the Mn(2+) site. Position 248 is a phosphoserine (Ser-248). Positions 298 and 337 each coordinate Mn(2+).

The protein belongs to the PP2C family. Monomer. Interacts with E1 and E2 components of the branched-chain alpha-ketoacid dehydrogenase (BCKDH) complex; this interaction requires colocalization in mitochondria. Interacts with BCKDHA but not with BCKDHB of the E1 component. Interacts with the 24-meric E2 core composed of DBT monomers with a 24:1 stoichiometry; the N-terminal region (residues 49-61) of PPM1K and C-terminal linker of the lipoyl domain of DBT (residues 145-160) are critical for this interaction, whereas the lipoyl prosthetic group is dispensable. Competes with BCKDK for binding to the E2 core; this interaction is modulated by branched-chain alpha-keto acids. At steady state, BCKDH holoenzyme preferentially binds BCKDK and BCKDHA is phosphorylated. In response to high levels of branched-chain alpha-keto acids, the inhibitory BCKDK is replaced by activating PPM1K leading to BCKDHA dephosphorylation and BCAA degradation. Requires Mn(2+) as cofactor. Highly expressed in the heart, kidney, brain and liver and to a lesser extent in testis, lung, spleen and adipose tissue. Very low amount in muscle (at protein level). Also expressed in the thymus (at protein level) and the diaphragm. Significantly reduced in hypertrophied hearts.

It localises to the mitochondrion matrix. It carries out the reaction O-phospho-L-seryl-[3-methyl-2-oxobutanoate dehydrogenase] + H2O = L-seryl-[3-methyl-2-oxobutanoate dehydrogenase] + phosphate. It catalyses the reaction O-phospho-L-seryl-[protein] + H2O = L-seryl-[protein] + phosphate. The protein operates within protein modification. Functionally, serine/threonine-protein phosphatase component of macronutrients metabolism. Forms a functional kinase and phosphatase pair with BCKDK, serving as a metabolic regulatory node that coordinates branched-chain amino acids (BCAAs) with glucose and lipid metabolism via two distinct phosphoprotein targets: mitochondrial BCKDHA subunit of the branched-chain alpha-ketoacid dehydrogenase (BCKDH) complex and cytosolic ACLY, a lipogenic enzyme of Krebs cycle. At high levels of branched-chain ketoacids, dephosphorylates and activates mitochondrial BCKDH complex, a multisubunit complex consisting of three multimeric components each involved in different steps of BCAA catabolism: E1 composed of BCKDHA and BCKDHB, E2 core composed of DBT monomers, and E3 composed of DLD monomers. Tightly associates with the E2 component of BCKDH complex and dephosphorylates BCKDHA on Ser-334. Regulates the reversible phosphorylation of ACLY in response to changes in cellular carbohydrate abundance such as occurs during fasting to feeding metabolic transition. At fasting state, appears to dephosphorylate ACLY on Ser-455 and inactivate it. Refeeding stimulates MLXIPL/ChREBP transcription factor, leading to increased BCKDK to PPM1K expression ratio, phosphorylation and activation of ACLY that ultimately results in the generation of malonyl-CoA and oxaloacetate immediate substrates of de novo lipogenesis and gluconeogenesis, respectively. Recognizes phosphosites having SxS or RxxS motifs and strictly depends on Mn(2+) ions for the phosphatase activity. Regulates Ca(2+)-induced opening of mitochondrial transition pore and apoptotic cell death. This is Protein phosphatase Mn(2+)-dependent 1K from Mus musculus (Mouse).